Consider the following 202-residue polypeptide: Endothelin-1 (202 aa).

An N-terminal signal peptide occupies residues 1–25 (MDYLPVLFSLLLVVFQGAPEAAVLG). Positions 26–50 (AELSTGPDSGGEKPAPSAPWRPRRS) are excised as a propeptide. The disordered stretch occupies residues 28–48 (LSTGPDSGGEKPAPSAPWRPR). 2 disulfide bridges follow: C53–C67 and C55–C63. Positions 74–202 (VNTPEHIVPY…EKKVTHNRTH (129 aa)) are excised as a propeptide. Residues 110–124 (CQCASQKDKKCWTFC) are endothelin-like.

This sequence belongs to the endothelin/sarafotoxin family.

Its subcellular location is the secreted. In terms of biological role, endothelins are endothelium-derived vasoconstrictor peptides. Probable ligand for G-protein coupled receptors EDNRA and EDNRB which activates PTK2B, BCAR1, BCAR3 and, GTPases RAP1 and RHOA cascade in glomerular mesangial cells. Also binds the DEAR/FBXW7-AS1 receptor. Promotes mesenteric arterial wall remodeling via activation of ROCK signaling and subsequent colocalization of NFATC3 with F-actin filaments. NFATC3 then translocates to the nucleus where it subsequently promotes the transcription of the smooth muscle hypertrophy and differentiation marker ACTA2. This Felis catus (Cat) protein is Endothelin-1 (EDN1).